We begin with the raw amino-acid sequence, 372 residues long: Signal peptide peptidase-like 1 (372 aa).

The Lumenal segment spans residues 1 to 6; the sequence is METLWT. A helical transmembrane segment spans residues 7-27; the sequence is LLYLLEPAPATLIVTAVTVTF. Over 28–54 the chain is Cytoplasmic; that stretch reads ASAFRALNYGKEMERNRDFSEASITLD. A helical membrane pass occupies residues 55-77; that stretch reads SSQALMIPVMSSCSLLLMFYLFS. The Lumenal portion of the chain corresponds to 78 to 81; it reads SVSQ. The helical transmembrane segment at 82-104 threads the bilayer; sequence LLTAFTAIASVSSLFYWLSPYAV. The Cytoplasmic segment spans residues 105 to 123; that stretch reads YMKTQLGLSDPFLSRCCSK. Residues 124-146 form a helical membrane-spanning segment; sequence SFTRIQGLLLVACAMTVVAWLIS. At 147–149 the chain is on the lumenal side; sequence GHW. The helical transmembrane segment at 150–167 threads the bilayer; it reads VLNNLLGISICIAFVSHV. The Cytoplasmic portion of the chain corresponds to 168–171; that stretch reads RLPN. Residues 172–192 traverse the membrane as a helical segment; it reads IKICAMLLVCLFVYDIFWVFF. Asp-186 is an active-site residue. The Lumenal portion of the chain corresponds to 193–257; the sequence is SERFFGANVM…GVVPGVSASD (65 aa). The helical transmembrane segment at 258 to 278 threads the bilayer; that stretch reads FMMLGLGDMAIPAMLLALVLC. Asp-265 is a catalytic residue. Residues 279-301 are Cytoplasmic-facing; the sequence is FDHRKTRDVVNIFDLKSSKGHKY. The chain crosses the membrane as a helical span at residues 302-322; it reads IWYALPGYAIGLVAALAAGVL. The Lumenal segment spans residues 323 to 325; it reads THS. A helical transmembrane segment spans residues 326 to 346; that stretch reads PQPALLYLVPSTLGPVIFMSW. A PAL motif is present at residues 328–330; that stretch reads PAL. Residues 347-372 are Cytoplasmic-facing; sequence RRKDLAELWEGPALSNPIEKSHEIEI.

The protein belongs to the peptidase A22B family. In terms of tissue distribution, ubiquitous.

It is found in the endosome membrane. Its function is as follows. Intramembrane-cleaving aspartic protease (I-CLiP) that cleaves type II membrane signal peptides in the hydrophobic plane of the membrane. This chain is Signal peptide peptidase-like 1 (SPPL1), found in Arabidopsis thaliana (Mouse-ear cress).